Consider the following 494-residue polypeptide: Solute carrier family 2, facilitated glucose transporter member 3 (494 aa).

The Cytoplasmic segment spans residues 1–10 (MGTTKVTAPL). The chain crosses the membrane as a helical span at residues 11-32 (IFAISVATIGSFQFGYNTGVIN). The Extracellular portion of the chain corresponds to 33–64 (APEAIIKDFLNYTLEERSEPPPSSVLLTSLWS). The N-linked (GlcNAc...) asparagine glycan is linked to Asn43. Residues 65–85 (LSVAIFSVGGMIGSFSVGLFV) traverse the membrane as a helical segment. The Cytoplasmic segment spans residues 86–90 (NRFGR). The helical transmembrane segment at 91–111 (GNSMLIVNLLAIAGGCLMGFC) threads the bilayer. Residues 112 to 118 (KIAESVE) are Extracellular-facing. A helical membrane pass occupies residues 119 to 142 (MLILGRLIIGLFCGLCTGFVPMYI). At 143 to 153 (GEISPTALRGA) the chain is on the cytoplasmic side. The chain crosses the membrane as a helical span at residues 154-174 (FGTLNQLGIVIGILVAQIFGL). Gln159 contacts D-glucose. At 175–183 (KVILGTEDL) the chain is on the extracellular side. Residues 184–204 (WPLLLGFTILPAIIQCAALPF) form a helical membrane-spanning segment. At 205 to 269 (CPESPRFLLI…LFRAPNYRQP (65 aa)) the chain is on the cytoplasmic side. A Phosphothreonine modification is found at Thr232. Residues 270–290 (IIISIMLQLSQQLSGINAVFY) traverse the membrane as a helical segment. Positions 277 to 279 (QLS) are important for selectivity against fructose. Residues 280 to 281 (QQ) and Asn286 each bind D-glucose. Residues 291–304 (YSTGIFKDAGVQEP) are Extracellular-facing. A helical transmembrane segment spans residues 305–325 (VYATIGAGVVNTIFTVVSVFL). Asn315 is a binding site for D-glucose. Topologically, residues 326 to 331 (VERAGR) are cytoplasmic. Residues 332–352 (RTLHLIGLGGMAFCSILMTIS) traverse the membrane as a helical segment. Residues 353–363 (LLLKDNYSWMS) are Extracellular-facing. A glycan (N-linked (GlcNAc...) asparagine) is linked at Asn358. The chain crosses the membrane as a helical span at residues 364–389 (FICIGAILVFVAFFEIGPGPIPWFIV). The D-glucose site is built by Glu378 and Trp386. Residues 390 to 399 (AELFGQGPRP) are Cytoplasmic-facing. The helical transmembrane segment at 400–420 (AAMAVAGCSNWTSNFLVGLLF) threads the bilayer. Residues 421–429 (PSAAFYLGA) are Extracellular-facing. The helical transmembrane segment at 430 to 450 (YVFIVFTVFLVIFWVFTFFKV) threads the bilayer. Residues 451 to 494 (PETRGRTFEEITRAFEGQTQTGTRGEKGPIMEMNSIQPTKDTNA) are Cytoplasmic-facing. Residues 469 to 494 (TQTGTRGEKGPIMEMNSIQPTKDTNA) are disordered. Over residues 484 to 494 (NSIQPTKDTNA) the composition is skewed to polar residues. Ser485 is modified (phosphoserine). Thr492 carries the phosphothreonine modification.

This sequence belongs to the major facilitator superfamily. Sugar transporter (TC 2.A.1.1) family. Glucose transporter subfamily. In terms of assembly, interacts with SMIM43; the interaction may promote SLC2A1-mediated glucose transport to meet the energy needs of mesendoderm differentiation.

It is found in the cell membrane. It localises to the perikaryon. The protein resides in the cell projection. The catalysed reaction is D-glucose(out) = D-glucose(in). It catalyses the reaction D-galactose(in) = D-galactose(out). Deoxyglucose transport is inhibited by D-glucose, D-galactose and maltose. Galactose transport is inhibited by D-glucose and maltose. Functionally, facilitative glucose transporter. Can also mediate the uptake of various other monosaccharides across the cell membrane. Mediates the uptake of glucose, 2-deoxyglucose, galactose, mannose, xylose and fucose, and probably also dehydroascorbate. Does not mediate fructose transport. Required for mesendoderm differentiation. The sequence is that of Solute carrier family 2, facilitated glucose transporter member 3 from Bos taurus (Bovine).